Here is an 881-residue protein sequence, read N- to C-terminus: Rho GTPase-activating protein 17 (881 aa).

The region spanning 14–246 is the BAR domain; that stretch reads QTVGRAEKTE…MRAHQDKWAE (233 aa). The region spanning 252–442 is the Rho-GAP domain; the sequence is TPLEEHLKRS…PIIQHADWFF (191 aa). Residues 459 to 475 show a composition bias toward polar residues; it reads TPSSNHSFHTGNDSDSG. The interval 459 to 482 is disordered; that stretch reads TPSSNHSFHTGNDSDSGTLERKRP. Phosphoserine occurs at positions 484 and 575. The interval 511–881 is disordered; the sequence is GGTLNRKHIS…IDNDTESTAL (371 aa). Over residues 592 to 617 the composition is skewed to polar residues; it reads RNNSQIASGQNQPQAAAGSHQLSMGQ. Residues 637 to 650 show a composition bias toward pro residues; sequence APAPPKPGNPPPGH. Positions 653–664 are enriched in low complexity; that stretch reads GQSSSGTSQHPP. Residues 665–678 are compositionally biased toward pro residues; sequence SLSPKPPTRSPSPP. 2 positions are modified to phosphothreonine: T679 and T682. Over residues 679–698 the composition is skewed to low complexity; it reads TQHTGQPPGQPSAPSQLSAP. Phosphoserine occurs at positions 702 and 704. 3 stretches are compositionally biased toward pro residues: residues 712–721, 752–764, and 806–816; these read NHPPPQPPTQ, HTPP…PSTP, and RPSVPPPPQPP. 3 positions are modified to phosphothreonine: T753, T757, and T759. The SH3-binding motif lies at 753–766; that stretch reads TPPQTPTPPSTPPL. S762 is modified (phosphoserine). A Phosphothreonine modification is found at T763. Polar residues predominate over residues 822–844; sequence GDSSLTNTAPTASKIVTDSNSRV. The segment covering 845–865 has biased composition (basic and acidic residues); sequence SEPHRSIFPEMHSDSASKDVP. Over residues 872–881 the composition is skewed to acidic residues; it reads IDNDTESTAL.

In terms of assembly, component of a complex whose core is composed of ARHGAP17, AMOT, PALS1, PATJ and PARD3/PAR3. Interacts with NHERF1, FNBP1, TRIP10, CAPZA (CAPZA1, CAPZA2 or CAPZA3), CAPZB, CD2AP and SH3KBP1/CIN85. As to expression, ubiquitously expressed. Expressed at higher level in heart and placenta.

Its subcellular location is the membrane. The protein resides in the cytoplasm. It is found in the cell junction. The protein localises to the tight junction. In terms of biological role, rho GTPase-activating protein involved in the maintenance of tight junction by regulating the activity of CDC42, thereby playing a central role in apical polarity of epithelial cells. Specifically acts as a GTPase activator for the CDC42 GTPase by converting it to an inactive GDP-bound state. The complex formed with AMOT acts by regulating the uptake of polarity proteins at tight junctions, possibly by deciding whether tight junction transmembrane proteins are recycled back to the plasma membrane or sent elsewhere. Participates in the Ca(2+)-dependent regulation of exocytosis, possibly by catalyzing GTPase activity of Rho family proteins and by inducing the reorganization of the cortical actin filaments. Acts as a GTPase activator in vitro for RAC1. This chain is Rho GTPase-activating protein 17 (ARHGAP17), found in Homo sapiens (Human).